The sequence spans 116 residues: Ribonuclease T (116 aa).

Positions 18 to 99 (KRAILVGHNS…YDTEKTAELF (82 aa)) constitute an Exonuclease domain. The active-site Proton donor/acceptor is the H86.

Belongs to the RNase T family. In terms of assembly, homodimer.

In terms of biological role, trims short 3' overhangs of a variety of RNA species, leaving a one or two nucleotide 3' overhang. Responsible for the end-turnover of tRNA: specifically removes the terminal AMP residue from uncharged tRNA (tRNA-C-C-A). Also appears to be involved in tRNA biosynthesis. The chain is Ribonuclease T from Azotobacter vinelandii.